Here is a 456-residue protein sequence, read N- to C-terminus: Solute carrier family 38 member 6 (456 aa).

Position 1 is an N-acetylmethionine (methionine 1). A phosphoserine mark is found at serine 4 and serine 7. 5 helical membrane-spanning segments follow: residues 42 to 62 (SPGV…MGSG), 85 to 105 (VALL…QTAV), 111 to 131 (LGLF…IIIQ), 170 to 190 (LLII…KIGF), and 191 to 211 (LGYT…VVII). A disulfide bridge connects residues cysteine 218 and cysteine 238. A glycan (N-linked (GlcNAc...) asparagine) is linked at asparagine 233. The chain crosses the membrane as a helical span at residues 250–270 (AYALPTMAFSFLCHTSILPIY). An N-linked (GlcNAc...) asparagine glycan is attached at asparagine 283. The next 5 helical transmembrane spans lie at 288–308 (AIAL…LTFY), 327–347 (VVVM…VPLI), 371–391 (FLIT…VPDI), 394–414 (VFGV…PGLF), and 431–451 (AFVL…LIIF).

Belongs to the amino acid/polyamine transporter 2 family.

The protein localises to the cell membrane. It is found in the synapse. It catalyses the reaction L-glutamine(out) = L-glutamine(in). It carries out the reaction L-glutamate(out) = L-glutamate(in). Amino acid transporter with an apparent selectivity for L-glutamine and L-glutamate. May facilitate glutamine uptake in excitatory neurons. The transport mechanism remains to be elucidated. This is Solute carrier family 38 member 6 from Homo sapiens (Human).